Consider the following 500-residue polypeptide: Intermediate filament protein ifc-1 (500 aa).

A head region spans residues 1 to 36 (MSLYGGIPTNLVSGMSSAGAICTTQIRDAREREKRE). Residues 33–383 (EKREIGLLND…VLLNGANVTT (351 aa)) enclose the IF rod domain. A coil 1A region spans residues 37–68 (IGLLNDRLADYIEKVRFLKAQNHVLSHDIEIL). The interval 69–81 (RRGFSGGGHISSF) is linker 1. The segment at 82–219 (FESEISNCTV…TENSSRIEQE (138 aa)) is coil 1B. A linker 12 region spans residues 220–237 (LIYIHRDTTLENRDYFRQ). Residues 238–383 (ELQAAMRDIR…VLLNGANVTT (146 aa)) form a coil 2 region. The segment at 384-496 (YVSNSTGAAG…RHHESSYSYS (113 aa)) is tail.

This sequence belongs to the intermediate filament family.

It localises to the cytoplasm. In terms of biological role, cytoplasmic intermediate filaments provide mechanical strength to cells. Not essential protein. In Caenorhabditis elegans, this protein is Intermediate filament protein ifc-1 (ifc-1).